Reading from the N-terminus, the 89-residue chain is Small ribosomal subunit protein eS25A (89 aa).

This sequence belongs to the eukaryotic ribosomal protein eS25 family. In terms of assembly, component of the small ribosomal subunit (SSU). Mature yeast ribosomes consist of a small (40S) and a large (60S) subunit. The 40S small subunit contains 1 molecule of ribosomal RNA (18S rRNA) and at least 33 different proteins. The large 60S subunit contains 3 rRNA molecules (25S, 5.8S and 5S rRNA) and at least 46 different proteins.

Its subcellular location is the cytoplasm. Component of the ribosome, a large ribonucleoprotein complex responsible for the synthesis of proteins in the cell. The small ribosomal subunit (SSU) binds messenger RNAs (mRNAs) and translates the encoded message by selecting cognate aminoacyl-transfer RNA (tRNA) molecules. The large subunit (LSU) contains the ribosomal catalytic site termed the peptidyl transferase center (PTC), which catalyzes the formation of peptide bonds, thereby polymerizing the amino acids delivered by tRNAs into a polypeptide chain. The nascent polypeptides leave the ribosome through a tunnel in the LSU and interact with protein factors that function in enzymatic processing, targeting, and the membrane insertion of nascent chains at the exit of the ribosomal tunnel. This is Small ribosomal subunit protein eS25A (rps2502) from Schizosaccharomyces pombe (strain 972 / ATCC 24843) (Fission yeast).